A 151-amino-acid polypeptide reads, in one-letter code: Deoxyuridine 5'-triphosphate nucleotidohydrolase (151 aa).

Substrate is bound by residues 70-72 (RSG), Asn83, 87-89 (LID), and Met97.

It belongs to the dUTPase family. The cofactor is Mg(2+).

It catalyses the reaction dUTP + H2O = dUMP + diphosphate + H(+). The protein operates within pyrimidine metabolism; dUMP biosynthesis; dUMP from dCTP (dUTP route): step 2/2. This enzyme is involved in nucleotide metabolism: it produces dUMP, the immediate precursor of thymidine nucleotides and it decreases the intracellular concentration of dUTP so that uracil cannot be incorporated into DNA. The chain is Deoxyuridine 5'-triphosphate nucleotidohydrolase from Pseudomonas putida (strain ATCC 47054 / DSM 6125 / CFBP 8728 / NCIMB 11950 / KT2440).